The sequence spans 348 residues: Succinoglycan biosynthesis protein ExoO (348 aa).

A disordered region spans residues histidine 322–glycine 348. Residues alanine 324–alanine 334 are compositionally biased toward low complexity.

The protein belongs to the glycosyltransferase 2 family.

It localises to the cytoplasm. The protein operates within glycan metabolism; exopolysaccharide biosynthesis. In terms of biological role, glycosyltransferase required for the synthesis of succinoglycan (EPS I). Needed for the addition of the fifth sugar (glucose), catalyzes the formation of a beta-1,6 linkage between the fourth and fifth sugar. This chain is Succinoglycan biosynthesis protein ExoO (exoO), found in Rhizobium meliloti (strain 1021) (Ensifer meliloti).